Consider the following 85-residue polypeptide: Toxin BmKa3 (85 aa).

The signal sequence occupies residues 1 to 19 (MNYLVFFSLALLLMTGVES). The LCN-type CS-alpha/beta domain occupies 21–83 (RDGYIADDKN…VPIRVPGKCN (63 aa)). Intrachain disulfides connect C31/C82, C35/C55, C41/C65, and C45/C67.

The protein belongs to the long (4 C-C) scorpion toxin superfamily. Sodium channel inhibitor family. Alpha subfamily. In terms of tissue distribution, expressed by the venom gland.

It localises to the secreted. Functionally, alpha toxins bind voltage-independently at site-3 of sodium channels (Nav) and inhibit the inactivation of the activated channels, thereby blocking neuronal transmission. The protein is Toxin BmKa3 of Olivierus martensii (Manchurian scorpion).